The chain runs to 419 residues: L-rhamnose isomerase (419 aa).

Mn(2+) contacts are provided by H262, D294, and D296.

Belongs to the rhamnose isomerase family. Homotetramer. Mn(2+) serves as cofactor.

Its subcellular location is the cytoplasm. The enzyme catalyses L-rhamnopyranose = L-rhamnulose. Its pathway is carbohydrate degradation; L-rhamnose degradation; glycerone phosphate from L-rhamnose: step 1/3. Functionally, catalyzes the interconversion of L-rhamnose and L-rhamnulose. The chain is L-rhamnose isomerase from Shigella flexneri.